The primary structure comprises 196 residues: Peroxynitrite isomerase (196 aa).

The segment at 1–29 is disordered; the sequence is MSDENPLQPPWLNAPPVDPYPYEESHDLR. The segment covering 7–19 has biased composition (pro residues); that stretch reads LQPPWLNAPPVDP. A GXWXGXG motif is present at residues 46-52; sequence GVWRGRG. His186 contacts heme b.

The protein belongs to the nitrobindin family. Homodimer. Heme b serves as cofactor.

It catalyses the reaction peroxynitrite = nitrate. Its pathway is nitrogen metabolism. Its function is as follows. Heme-binding protein able to scavenge peroxynitrite and to protect free L-tyrosine against peroxynitrite-mediated nitration, by acting as a peroxynitrite isomerase that converts peroxynitrite to nitrate. Therefore, this protein likely plays a role in peroxynitrite sensing and in the detoxification of reactive nitrogen and oxygen species (RNS and ROS, respectively). Is able to bind nitric oxide (NO) in vitro, but may act as a sensor of peroxynitrite levels in vivo. This Salinispora arenicola (strain CNS-205) protein is Peroxynitrite isomerase.